A 388-amino-acid polypeptide reads, in one-letter code: 2-Hydroxyacid oxidase (388 aa).

A disordered region spans residues Met-1 to Ser-21. The FMN hydroxy acid dehydrogenase domain occupies Asn-26 to Lys-384. Tyr-52 serves as a coordination point for glyoxylate. Residues Pro-105–Ala-107, Ser-134, Gln-156–Tyr-158, and Thr-184 each bind FMN. Tyr-158 is a binding site for glyoxylate. Residue Arg-193 coordinates glyoxylate. FMN is bound by residues Lys-255 and Ser-277. Residues His-279 and Arg-282 each contribute to the glyoxylate site. His-279 (proton acceptor) is an active-site residue. Residues Asp-310 to Arg-314 and Gly-333 to Arg-334 each bind FMN.

This sequence belongs to the FMN-dependent alpha-hydroxy acid dehydrogenase family. Homotetramer. Requires FMN as cofactor.

It catalyses the reaction glycolate + O2 = glyoxylate + H2O2. It carries out the reaction a (2S)-2-hydroxycarboxylate + O2 = a 2-oxocarboxylate + H2O2. Its function is as follows. Catalyzes the oxidation of glycolate to glyoxylate, with a reduction of O2 to H2O2. May use other 2-hydroxyacids as substrates. The protein is 2-Hydroxyacid oxidase (haox) of Dictyostelium discoideum (Social amoeba).